The following is a 336-amino-acid chain: Phosphoribosylformylglycinamidine cyclo-ligase (336 aa).

This sequence belongs to the AIR synthase family.

Its subcellular location is the cytoplasm. The catalysed reaction is 2-formamido-N(1)-(5-O-phospho-beta-D-ribosyl)acetamidine + ATP = 5-amino-1-(5-phospho-beta-D-ribosyl)imidazole + ADP + phosphate + H(+). Its pathway is purine metabolism; IMP biosynthesis via de novo pathway; 5-amino-1-(5-phospho-D-ribosyl)imidazole from N(2)-formyl-N(1)-(5-phospho-D-ribosyl)glycinamide: step 2/2. This is Phosphoribosylformylglycinamidine cyclo-ligase from Thermoanaerobacter sp. (strain X514).